A 207-amino-acid chain; its full sequence is Uracil phosphoribosyltransferase (207 aa).

Residues Arg77, Arg102, and 129 to 137 (DPMLATGGS) contribute to the 5-phospho-alpha-D-ribose 1-diphosphate site. Uracil is bound by residues Ile192 and 197–199 (GDA). Asp198 serves as a coordination point for 5-phospho-alpha-D-ribose 1-diphosphate.

The protein belongs to the UPRTase family. Mg(2+) serves as cofactor.

It catalyses the reaction UMP + diphosphate = 5-phospho-alpha-D-ribose 1-diphosphate + uracil. Its pathway is pyrimidine metabolism; UMP biosynthesis via salvage pathway; UMP from uracil: step 1/1. Its activity is regulated as follows. Allosterically activated by GTP. Its function is as follows. Catalyzes the conversion of uracil and 5-phospho-alpha-D-ribose 1-diphosphate (PRPP) to UMP and diphosphate. The protein is Uracil phosphoribosyltransferase of Nocardia farcinica (strain IFM 10152).